The sequence spans 293 residues: Glycine--tRNA ligase alpha subunit (293 aa).

Belongs to the class-II aminoacyl-tRNA synthetase family. In terms of assembly, tetramer of two alpha and two beta subunits.

The protein resides in the cytoplasm. The catalysed reaction is tRNA(Gly) + glycine + ATP = glycyl-tRNA(Gly) + AMP + diphosphate. This is Glycine--tRNA ligase alpha subunit from Prochlorococcus marinus (strain MIT 9211).